We begin with the raw amino-acid sequence, 392 residues long: Bone morphogenetic protein 15 (392 aa).

A signal peptide spans 1-18; sequence MVLLSILRILFLCELVLF. The propeptide occupies 19–267; it reads MEHRAQMAEG…ERESLLRRTR (249 aa). 3 N-linked (GlcNAc...) asparagine glycosylation sites follow: N87, N147, and N237. Q268 bears the Pyrrolidone carboxylic acid; in P16 and P17 mark. S273 carries the post-translational modification Phosphoserine; in P16. Residue T277 is glycosylated (O-linked (HexNAc...) threonine; in P17). Disulfide bonds link C291/C357, C320/C389, and C324/C391. The N-linked (GlcNAc...) asparagine glycan is linked to N373.

The protein belongs to the TGF-beta family. In terms of assembly, homodimer. But, in contrast to other members of this family, cannot be disulfide-linked.

The protein localises to the secreted. In terms of biological role, may be involved in follicular development. Oocyte-specific growth/differentiation factor that stimulates folliculogenesis and granulosa cell (GC) growth. The polypeptide is Bone morphogenetic protein 15 (BMP15) (Homo sapiens (Human)).